A 309-amino-acid polypeptide reads, in one-letter code: uncharacterized protein (309 aa).

6 helical membrane-spanning segments follow: residues 28–48 (IIAL…IMKP), 73–93 (MMLN…VIGW), 113–133 (LIVI…LLPI), 157–177 (ITAF…YFHS), 220–240 (FVVI…AALF), and 259–279 (IFAV…ILIL).

It is found in the cell membrane. This is an uncharacterized protein from Bacillus subtilis (strain 168).